The chain runs to 82 residues: U16-lycotoxin-Ls1a (82 aa).

An N-terminal signal peptide occupies residues 1-22 (MSPKVQALLLLVGLITFLAVHA). A propeptide spanning residues 23–34 (EEELSETVESER) is cleaved from the precursor. Disulfide bonds link Cys36/Cys51, Cys43/Cys56, Cys50/Cys67, and Cys58/Cys65.

The protein belongs to the neurotoxin 02 (plectoxin) family. 04 (U16-lycotoxin) subfamily. As to expression, expressed by the venom gland.

It is found in the secreted. This Lycosa singoriensis (Wolf spider) protein is U16-lycotoxin-Ls1a.